The chain runs to 191 residues: Pentapeptide repeat protein MfpA (191 aa).

The Pentapeptide repeat domain occupies 115–154 (CRLREVSLVGADLRKAVLRRADLTGSRVQDARLEEADLRG).

The protein belongs to the pentapeptide repeat protein family. In terms of assembly, homodimer. Probably interacts with DNA gyrase.

When present on multicopy plasmids confers increased resistance to fluoroquinolone antibiotics such as ciprofloxacin and sparfloxacin but not the quinolone nalidixic acid. Forms a structure that exhibits size, shape and electrostatic similarity to B-form DNA; it may bind to DNA gyrase which is postulated to protect it from fluoroquinolones. In Mycolicibacterium smegmatis (strain ATCC 700084 / mc(2)155) (Mycobacterium smegmatis), this protein is Pentapeptide repeat protein MfpA.